The chain runs to 908 residues: DNA mismatch repair protein MutS (908 aa).

Gly629–Ser636 lines the ATP pocket. The tract at residues Ala822–Asn863 is disordered.

The protein belongs to the DNA mismatch repair MutS family.

Functionally, this protein is involved in the repair of mismatches in DNA. It is possible that it carries out the mismatch recognition step. This protein has a weak ATPase activity. This chain is DNA mismatch repair protein MutS, found in Salinibacter ruber (strain DSM 13855 / M31).